Consider the following 225-residue polypeptide: Transmembrane protein 225 (225 aa).

Over 1–8 the chain is Cytoplasmic; the sequence is MVHVSNRS. A helical membrane pass occupies residues 9-29; the sequence is IQGMNILFSSWAVVLMVMGIT. The Extracellular portion of the chain corresponds to 30–72; that stretch reads LDKWVELISEDERAKMNHSPWMMCCPALWPEDDLKVVRIMMTS. The helical transmembrane segment at 73–93 threads the bilayer; the sequence is SLGLSFLLNLILGMKFTYLIP. The Cytoplasmic segment spans residues 94 to 99; that stretch reads QNKYIQ. A helical membrane pass occupies residues 100-120; sequence LFTTILSFFSGISLLWALILY. Over 121–136 the chain is Extracellular; sequence HNKLKQGQSMHFSSYR. The chain crosses the membrane as a helical span at residues 137 to 157; the sequence is ITWIMYTAYLNVFFLSVCGVL. Topologically, residues 158 to 225 are cytoplasmic; sequence SLLECKLSTS…VQTRHVTWAL (68 aa). The RVxF signature appears at 219-223; that stretch reads RHVTW.

As to quaternary structure, interacts (via RVxF motif) with PPP1CC.

It is found in the cytoplasmic vesicle. It localises to the secretory vesicle. The protein resides in the acrosome membrane. Probably inhibits protein phosphatase 1 (PP1) in sperm via binding to catalytic subunit PPP1CC. The sequence is that of Transmembrane protein 225 (TMEM225) from Homo sapiens (Human).